The primary structure comprises 278 residues: Sulfur carrier protein FdhD (278 aa).

C121 (cysteine persulfide intermediate) is an active-site residue. 260–265 serves as a coordination point for Mo-bis(molybdopterin guanine dinucleotide); the sequence is FCKPGR.

This sequence belongs to the FdhD family.

Its subcellular location is the cytoplasm. In terms of biological role, required for formate dehydrogenase (FDH) activity. Acts as a sulfur carrier protein that transfers sulfur from IscS to the molybdenum cofactor prior to its insertion into FDH. The polypeptide is Sulfur carrier protein FdhD (Salmonella newport (strain SL254)).